The following is a 125-amino-acid chain: Small ribosomal subunit protein uS12 (125 aa).

Position 89 is a 3-methylthioaspartic acid (Asp-89). The disordered stretch occupies residues 104–125; sequence LQGVKDRKQSRSKYGSKRPKKA. The segment covering 113–125 has biased composition (basic residues); the sequence is SRSKYGSKRPKKA.

This sequence belongs to the universal ribosomal protein uS12 family. In terms of assembly, part of the 30S ribosomal subunit. Contacts proteins S8 and S17. May interact with IF1 in the 30S initiation complex.

In terms of biological role, with S4 and S5 plays an important role in translational accuracy. Interacts with and stabilizes bases of the 16S rRNA that are involved in tRNA selection in the A site and with the mRNA backbone. Located at the interface of the 30S and 50S subunits, it traverses the body of the 30S subunit contacting proteins on the other side and probably holding the rRNA structure together. The combined cluster of proteins S8, S12 and S17 appears to hold together the shoulder and platform of the 30S subunit. In Leptothrix cholodnii (strain ATCC 51168 / LMG 8142 / SP-6) (Leptothrix discophora (strain SP-6)), this protein is Small ribosomal subunit protein uS12.